Consider the following 342-residue polypeptide: S-adenosylmethionine:tRNA ribosyltransferase-isomerase (342 aa).

This sequence belongs to the QueA family. As to quaternary structure, monomer.

It is found in the cytoplasm. It catalyses the reaction 7-aminomethyl-7-carbaguanosine(34) in tRNA + S-adenosyl-L-methionine = epoxyqueuosine(34) in tRNA + adenine + L-methionine + 2 H(+). It functions in the pathway tRNA modification; tRNA-queuosine biosynthesis. In terms of biological role, transfers and isomerizes the ribose moiety from AdoMet to the 7-aminomethyl group of 7-deazaguanine (preQ1-tRNA) to give epoxyqueuosine (oQ-tRNA). The polypeptide is S-adenosylmethionine:tRNA ribosyltransferase-isomerase (Streptococcus pneumoniae serotype 4 (strain ATCC BAA-334 / TIGR4)).